A 431-amino-acid chain; its full sequence is Glutamate-1-semialdehyde 2,1-aminomutase (431 aa).

The residue at position 269 (K269) is an N6-(pyridoxal phosphate)lysine.

The protein belongs to the class-III pyridoxal-phosphate-dependent aminotransferase family. HemL subfamily. In terms of assembly, homodimer. Pyridoxal 5'-phosphate is required as a cofactor.

The protein resides in the cytoplasm. The catalysed reaction is (S)-4-amino-5-oxopentanoate = 5-aminolevulinate. Its pathway is porphyrin-containing compound metabolism; protoporphyrin-IX biosynthesis; 5-aminolevulinate from L-glutamyl-tRNA(Glu): step 2/2. It functions in the pathway porphyrin-containing compound metabolism; chlorophyll biosynthesis. This chain is Glutamate-1-semialdehyde 2,1-aminomutase, found in Prosthecochloris aestuarii (strain DSM 271 / SK 413).